The following is a 462-amino-acid chain: Elongation factor 1-alpha (462 aa).

Position 2 is a n,N,N-trimethylglycine (G2). Residue K3 is modified to N6,N6-dimethyllysine; alternate. Residue K3 is modified to N6-methyllysine; alternate. Residues 5 to 242 (KAHVNVVVIG…DAIEPPVRPS (238 aa)) form the tr-type G domain. The tract at residues 14-21 (GHVDSGKS) is G1. Residue 14–21 (GHVDSGKS) participates in GTP binding. K30 carries the N6-methyllysine modification. Residues 70–74 (GITID) are G2. K79 bears the N6,N6,N6-trimethyllysine mark. Positions 91-94 (DAPG) are G3. GTP contacts are provided by residues 91–95 (DAPGH) and 153–156 (NKMD). Residues 153–156 (NKMD) are G4. The tract at residues 192 to 194 (SGW) is G5. K318 is subject to N6,N6-dimethyllysine; alternate. K318 carries the post-translational modification N6-methyllysine; alternate. An N6-methyllysine modification is found at K392.

It belongs to the TRAFAC class translation factor GTPase superfamily. Classic translation factor GTPase family. EF-Tu/EF-1A subfamily.

Its subcellular location is the cytoplasm. In terms of biological role, this protein promotes the GTP-dependent binding of aminoacyl-tRNA to the A-site of ribosomes during protein biosynthesis. This Serendipita indica (Root endophyte fungus) protein is Elongation factor 1-alpha (TEF1).